The primary structure comprises 162 residues: Large ribosomal subunit protein bL17 (162 aa).

The interval 126 to 162 (ATAKKATRTRRSKKSAAATEAPAAPAAETTEEAPKAE) is disordered. The span at 130–139 (KATRTRRSKK) shows a compositional bias: basic residues. Over residues 140 to 153 (SAAATEAPAAPAAE) the composition is skewed to low complexity.

The protein belongs to the bacterial ribosomal protein bL17 family. As to quaternary structure, part of the 50S ribosomal subunit. Contacts protein L32.

The sequence is that of Large ribosomal subunit protein bL17 from Phocaeicola vulgatus (strain ATCC 8482 / DSM 1447 / JCM 5826 / CCUG 4940 / NBRC 14291 / NCTC 11154) (Bacteroides vulgatus).